The sequence spans 231 residues: 5'-methylthioadenosine/S-adenosylhomocysteine nucleosidase (231 aa).

Residue E12 is the Proton acceptor of the active site. Residues G78, M153, and 174 to 175 (ME) contribute to the substrate site. Residue D198 is the Proton donor of the active site.

It belongs to the PNP/UDP phosphorylase family. MtnN subfamily.

The catalysed reaction is S-adenosyl-L-homocysteine + H2O = S-(5-deoxy-D-ribos-5-yl)-L-homocysteine + adenine. It carries out the reaction S-methyl-5'-thioadenosine + H2O = 5-(methylsulfanyl)-D-ribose + adenine. It catalyses the reaction 5'-deoxyadenosine + H2O = 5-deoxy-D-ribose + adenine. It functions in the pathway amino-acid biosynthesis; L-methionine biosynthesis via salvage pathway; S-methyl-5-thio-alpha-D-ribose 1-phosphate from S-methyl-5'-thioadenosine (hydrolase route): step 1/2. Catalyzes the irreversible cleavage of the glycosidic bond in both 5'-methylthioadenosine (MTA) and S-adenosylhomocysteine (SAH/AdoHcy) to adenine and the corresponding thioribose, 5'-methylthioribose and S-ribosylhomocysteine, respectively. Also cleaves 5'-deoxyadenosine, a toxic by-product of radical S-adenosylmethionine (SAM) enzymes, into 5-deoxyribose and adenine. The protein is 5'-methylthioadenosine/S-adenosylhomocysteine nucleosidase of Bacillus licheniformis (strain ATCC 14580 / DSM 13 / JCM 2505 / CCUG 7422 / NBRC 12200 / NCIMB 9375 / NCTC 10341 / NRRL NRS-1264 / Gibson 46).